The primary structure comprises 31 residues: Protamine-YI (31 aa).

The tract at residues 1-31 is disordered; it reads ARRRRSSSRPIRRRRPRRRTTRRRRAGRRRR.

Testis.

The protein resides in the nucleus. Its subcellular location is the chromosome. Its function is as follows. Protamines substitute for histones in the chromatin of sperm during the haploid phase of spermatogenesis. They compact sperm DNA into a highly condensed, stable and inactive complex. This chain is Protamine-YI, found in Clupea harengus (Atlantic herring).